Here is a 90-residue protein sequence, read N- to C-terminus: Auxin-responsive protein SAUR19 (90 aa).

The protein belongs to the ARG7 family. In terms of assembly, interacts with and inhibits PP2C-D subfamily of type 2C phosphatases such as PP2C67/PP2C-D1, PP2C64/PP2C-D5 and PP2C46/PP2C-D6.

The protein resides in the cell membrane. Its function is as follows. Provide a mechanistic link between auxin and plasma membrane H(+)-ATPases (PM H(+)-ATPases, e.g. AHA1 and AHA2), and triggers PM H(+)-ATPases activity by promoting phosphorylation of their C-terminal autoinhibitory domain as a result of PP2C-D subfamily of type 2C phosphatases inhibition, thus leading to the acidification of the apoplast and the facilitation of solutes and water uptake to drive cell expansion. Prevents the apical hook maintenance of etiolated seedlings. Functions as positive effectors of cell expansion through modulation of auxin transport. The polypeptide is Auxin-responsive protein SAUR19 (Arabidopsis thaliana (Mouse-ear cress)).